The following is a 133-amino-acid chain: Small ribosomal subunit protein uS9 (133 aa).

Over residues 97–113 the composition is skewed to basic and acidic residues; it reads SKQELKSHGFLTRDPRK. Residues 97 to 133 form a disordered region; it reads SKQELKSHGFLTRDPRKKERKKYGHKKARKSFQFSKR. Residues 114 to 133 are compositionally biased toward basic residues; it reads KERKKYGHKKARKSFQFSKR.

Belongs to the universal ribosomal protein uS9 family.

This chain is Small ribosomal subunit protein uS9, found in Chlamydia abortus (strain DSM 27085 / S26/3) (Chlamydophila abortus).